We begin with the raw amino-acid sequence, 418 residues long: Tyrosine--tRNA ligase (418 aa).

An L-tyrosine-binding site is contributed by Y34. Residues 39-48 (PTADSLHLGH) carry the 'HIGH' region motif. Y169 and Q173 together coordinate L-tyrosine. The 'KMSKS' region signature appears at 229-233 (KFGKS). K232 is a binding site for ATP. The 67-residue stretch at 352–418 (LNLVDMLVTA…GKKKYAVLTY (67 aa)) folds into the S4 RNA-binding domain.

This sequence belongs to the class-I aminoacyl-tRNA synthetase family. TyrS type 1 subfamily. Homodimer.

It is found in the cytoplasm. The catalysed reaction is tRNA(Tyr) + L-tyrosine + ATP = L-tyrosyl-tRNA(Tyr) + AMP + diphosphate + H(+). Functionally, catalyzes the attachment of tyrosine to tRNA(Tyr) in a two-step reaction: tyrosine is first activated by ATP to form Tyr-AMP and then transferred to the acceptor end of tRNA(Tyr). The protein is Tyrosine--tRNA ligase of Streptococcus pyogenes serotype M12 (strain MGAS2096).